We begin with the raw amino-acid sequence, 792 residues long: Alpha-1,6-mannosylglycoprotein 6-beta-N-acetylglucosaminyltransferase B (792 aa).

Over 1-24 (MITVNPDGKIMVRRCLVTLRPFRL) the chain is Cytoplasmic. Residues 25–45 (FVLGIGFFTLCFLMTSLGGQF) form a helical; Signal-anchor for type II membrane protein membrane-spanning segment. The Lumenal segment spans residues 46–792 (SARRLGDSPF…GQVALCQGCL (747 aa)). The N-linked (GlcNAc...) asparagine glycan is linked to N127. Cystine bridges form between C157–C195, C168–C208, C184–C353, C387–C644, C700–C775, C704–C777, C711–C764, C732–C753, and C788–C791.

Belongs to the glycosyltransferase 18 family. Requires Mn(2+) as cofactor. In terms of tissue distribution, predominantly expressed in brain. Expressed in all areas of the adult and fetal brain. Also expressed at much lower levels in testis, spleen and thymus.

It localises to the golgi apparatus membrane. It catalyses the reaction N(4)-{beta-D-GlcNAc-(1-&gt;2)-[beta-D-GlcNAc-(1-&gt;4)]-alpha-D-Man-(1-&gt;3)-[beta-D-GlcNAc-(1-&gt;2)-alpha-D-Man-(1-&gt;6)]-beta-D-Man-(1-&gt;4)-beta-D-GlcNAc-(1-&gt;4)-beta-D-GlcNAc}-L-asparaginyl-[protein] + UDP-N-acetyl-alpha-D-glucosamine = N(4)-{beta-D-GlcNAc-(1-&gt;2)-[beta-D-GlcNAc-(1-&gt;4)]-alpha-D-Man-(1-&gt;3)-[beta-D-GlcNAc-(1-&gt;2)-[beta-D-GlcNAc-(1-&gt;6)]-alpha-D-Man-(1-&gt;6)]-beta-D-Man-(1-&gt;4)-beta-D-GlcNAc-(1-&gt;4)-beta-D-GlcNAc}-L-asparaginyl-[protein] + UDP + H(+). It carries out the reaction 3-O-[N-acetyl-beta-D-glucosaminyl-(1-&gt;2)-alpha-D-mannosyl]-L-seryl-[protein] + UDP-N-acetyl-alpha-D-glucosamine = O(3)-{N-acetyl-beta-D-glucosaminyl-(1-&gt;2)-[N-acetyl-beta-D-glucosaminyl-(1-&gt;6)]-alpha-D-mannosyl}-L-seryl-[protein] + UDP + H(+). The catalysed reaction is 3-O-[N-acetyl-beta-D-glucosaminyl-(1-&gt;2)-alpha-D-mannosyl]-L-threonyl-[protein] + UDP-N-acetyl-alpha-D-glucosamine = O(3)-{N-acetyl-beta-D-glucosaminyl-(1-&gt;2)-[N-acetyl-beta-D-glucosaminyl-(1-&gt;6)]-alpha-D-mannosyl}-L-threonyl-[protein] + UDP + H(+). Its pathway is protein modification; protein glycosylation. Functionally, glycosyltransferase that acts on alpha-linked mannose of N-glycans and O-mannosyl glycans. Catalyzes the transfer of N-acetylglucosamine (GlcNAc) to the beta 1-6 linkage of the mannose residue of GlcNAc-beta1,2-Man-alpha on both the alpha1,3- and alpha1,6-linked mannose arms in the core structure of N-glycan. Also acts on the GlcNAc-beta1,2-Man-alpha1-Ser/Thr moiety, forming a 2,6-branched structure in brain O-mannosyl glycan. Plays an active role in modulating integrin and laminin-dependent adhesion and migration of neuronal cells via its activity in the O-mannosyl glycan pathway. The polypeptide is Alpha-1,6-mannosylglycoprotein 6-beta-N-acetylglucosaminyltransferase B (MGAT5B) (Homo sapiens (Human)).